The following is a 431-amino-acid chain: Polygalacturonase ADPG1 (431 aa).

The first 23 residues, 1–23 (MARCCRHLAVFLCVLLMLSLCKA), serve as a signal peptide directing secretion. 2 PbH1 repeats span residues 223-249 (CNKV…HITN) and 250-271 (TQNI…SIED). Aspartate 264 acts as the Proton donor in catalysis. The active site involves histidine 287. PbH1 repeat units lie at residues 303-324 (VSGI…RIKT), 332-353 (AKNI…IIDQ), and 398-420 (CQGI…NANV).

It belongs to the glycosyl hydrolase 28 family. In terms of tissue distribution, expressed in flower buds and siliques, in the dehiscence zone of anthers (stomium cells) and maturing siliques. Expressed in stigma during pollen tube growth. Not expressed in seeds or in the floral part or leaf abscission zone but found at the junction between the seed and the funiculus at the site of seed abscission.

It localises to the secreted. The protein resides in the cell wall. The protein localises to the cytoplasm. The catalysed reaction is (1,4-alpha-D-galacturonosyl)n+m + H2O = (1,4-alpha-D-galacturonosyl)n + (1,4-alpha-D-galacturonosyl)m.. Functionally, polygalacturonase involved in cell separation in the final stages of pod shatter and in anther dehiscence. Not involved in floral organ abscission. This chain is Polygalacturonase ADPG1 (ADPG1), found in Arabidopsis thaliana (Mouse-ear cress).